The following is a 512-amino-acid chain: MFCSAQKGSCSSRVSSSGAVGSRGCTGGSSFGGGSSCGLGGGSAWGFQGSSNSWSLSGGSKGSMGGGFGSCSVRGGFGAASSYGGGSGFGGSSGFGGGSGFGGGSGFGGGSSGGFSSYGGSMGCGLGGVSGYDGGLLSGSEKQTMQDLNDRLANYLDKVRALEEANTDLECKIKDWYGKHGSVKGGSGRDYSQYYSIIEDLKKQILSATCENARMTLQIDNARLAADDFRMKYEHELCLRECLEADINGLRKVLDEMTMTRCDLEMQIEGLTEELVFLRKNHEEEMKCMQGSSGGDVTVEMNAAPGVDLTKLLNDMRAQYEAMAEQNRQEAERQFNERSASLQAQISSDAGEANCARSEVMELKRTVQTLEIELQSQLALKCSLEGTLADTEAGYVAQLSGIQAQISSLEEQLSQIRAETQCQSAEYECLLNIKTRLEQEIETYRRLLNGDGGGCDYRNLVSKNVVLSDSGSCAGQGKDPSKTRVTKTIIEEVVDGRVVSSQVSNISEVKIK.

Residues 1 to 21 (MFCSAQKGSCSSRVSSSGAVG) are disordered. Residues 1-140 (MFCSAQKGSC…GYDGGLLSGS (140 aa)) form a head region. Residues 8–21 (GSCSSRVSSSGAVG) show a composition bias toward low complexity. The interval 141-176 (EKQTMQDLNDRLANYLDKVRALEEANTDLECKIKDW) is coil 1A. Residues 141 to 455 (EKQTMQDLND…RLLNGDGGGC (315 aa)) enclose the IF rod domain. The tract at residues 177 to 197 (YGKHGSVKGGSGRDYSQYYSI) is linker 1. The interval 198-289 (IEDLKKQILS…KNHEEEMKCM (92 aa)) is coil 1B. Residues 290 to 312 (QGSSGGDVTVEMNAAPGVDLTKL) form a linker 12 region. Residues 313–451 (LNDMRAQYEA…ETYRRLLNGD (139 aa)) are coil 2. The segment at 452-512 (GGGCDYRNLV…VSNISEVKIK (61 aa)) is tail.

Belongs to the intermediate filament family. In terms of assembly, heterotetramer of two type I and two type II keratins.

In Mus musculus (Mouse), this protein is Keratin, type I cytoskeletal 24 (Krt24).